The sequence spans 216 residues: GTP cyclohydrolase 1 (216 aa).

Residues Cys-108, His-111, and Cys-179 each coordinate Zn(2+).

The protein belongs to the GTP cyclohydrolase I family. As to quaternary structure, toroid-shaped homodecamer, composed of two pentamers of five dimers.

It catalyses the reaction GTP + H2O = 7,8-dihydroneopterin 3'-triphosphate + formate + H(+). It functions in the pathway cofactor biosynthesis; 7,8-dihydroneopterin triphosphate biosynthesis; 7,8-dihydroneopterin triphosphate from GTP: step 1/1. The sequence is that of GTP cyclohydrolase 1 from Shewanella amazonensis (strain ATCC BAA-1098 / SB2B).